The chain runs to 287 residues: MPYKVPEIYYRFEPQTFYITSPARASNLQLINHNNILVKAGQVTIVSTGIIFPKETSFAFILYGKSAKSIFCHTGLIDPGFQGELKLIVLNKTEDDITLFENDLRVSVTAFVYGVPKLHDYSDLCPPRYSKDAGFDLYLPTDVTVKPRVPNRYSVNICCPAQLKSYKPVLFGRSGLAAKGLTIKVSRWQNQLQIIFYNYTKSQITYTARTRIAQVVFMHKKHLPTTLTRLKPTMHLSENIKYSWARVSFQDIKTFPVQDEKLYSSSKDTSDSQMSRGDAGLGSSGLM.

173-175 provides a ligand contact to substrate; it reads RSG. A compositionally biased stretch (low complexity) spans 264–275; that stretch reads SSSKDTSDSQMS. The interval 264-287 is disordered; that stretch reads SSSKDTSDSQMSRGDAGLGSSGLM.

The protein belongs to the dUTPase family. Mg(2+) is required as a cofactor.

It catalyses the reaction dUTP + H2O = dUMP + diphosphate + H(+). In terms of biological role, involved in nucleotide metabolism: produces dUMP, the immediate precursor of thymidine nucleotides and decreases the intracellular concentration of dUTP to avoid uracil incorporation into viral DNA. The chain is Deoxyuridine 5'-triphosphate nucleotidohydrolase from Saimiriine herpesvirus 2 (strain 11) (SaHV-2).